The sequence spans 220 residues: Orotate phosphoribosyltransferase (220 aa).

Lys26 contributes to the 5-phospho-alpha-D-ribose 1-diphosphate binding site. 34-35 (FF) lines the orotate pocket. 5-phospho-alpha-D-ribose 1-diphosphate contacts are provided by residues 72-73 (YK), Arg99, Lys100, Lys103, His105, and 125-133 (DDVISAGTS). Orotate contacts are provided by Ser129 and Arg157.

This sequence belongs to the purine/pyrimidine phosphoribosyltransferase family. PyrE subfamily. As to quaternary structure, homodimer. Mg(2+) is required as a cofactor.

The catalysed reaction is orotidine 5'-phosphate + diphosphate = orotate + 5-phospho-alpha-D-ribose 1-diphosphate. Its pathway is pyrimidine metabolism; UMP biosynthesis via de novo pathway; UMP from orotate: step 1/2. Its function is as follows. Catalyzes the transfer of a ribosyl phosphate group from 5-phosphoribose 1-diphosphate to orotate, leading to the formation of orotidine monophosphate (OMP). The sequence is that of Orotate phosphoribosyltransferase from Nitrosococcus oceani (strain ATCC 19707 / BCRC 17464 / JCM 30415 / NCIMB 11848 / C-107).